The chain runs to 201 residues: MQTSPLLTQLMEALRCLPGVGPKSAQRMAFTLLQRDRSGGMRLAQALTRAMSEIGHCADCRTFTEQDVCNICTNPRRQENGQICVVESPADIYAIEQTGQFSGRYFVLMGHLSPLDGIGPDDIGLDRLEQRLESETLTEVILATNPTVEGEATANYIGELCAQYGVSASRIAHGVPVGGELEMVDGTTLSHSLAGRHKLIF.

A C4-type zinc finger spans residues 57–72 (CADCRTFTEQDVCNIC). In terms of domain architecture, Toprim spans 81-176 (GQICVVESPA…SASRIAHGVP (96 aa)).

The protein belongs to the RecR family.

Its function is as follows. May play a role in DNA repair. It seems to be involved in an RecBC-independent recombinational process of DNA repair. It may act with RecF and RecO. In Enterobacter sp. (strain 638), this protein is Recombination protein RecR.